Here is a 588-residue protein sequence, read N- to C-terminus: Ribonuclease Y (588 aa).

Residues 7-27 (VLLVAVLLLALIVLGAVLVGV) form a helical membrane-spanning segment. A disordered region spans residues 130–162 (ARRSGEREAAVLATTTREQAAEVERRAARMDDR). A compositionally biased stretch (basic and acidic residues) spans 148-162 (QAAEVERRAARMDDR). The region spanning 278–359 (VVSVLHLPGD…HRIEEVHDLA (82 aa)) is the KH domain. Residues 404-497 (VLKHLVETAH…TQASDACSGG (94 aa)) enclose the HD domain.

This sequence belongs to the RNase Y family.

Its subcellular location is the cell membrane. Its function is as follows. Endoribonuclease that initiates mRNA decay. This chain is Ribonuclease Y, found in Salinispora arenicola (strain CNS-205).